Here is a 1159-residue protein sequence, read N- to C-terminus: MKKFRKVLDGLTTSSPVNPGGSPGCGSAAGTPSAAPTPRELEIQETLMSEHFQICKTVRHGFPYQPTALAFDPVQKILAIGSRSGGIRMYPFLSFPHLGRPGVDCHSQHESGAAVLQMQFLINEGALVTACADDTLHLWSLRQRLPAILHSLKFNRERITFCHLPFQSKWLYVGTERGNTHIVNIESFILSGYVIMWNKAIELSTKTHPGPVVHLSDSPKDEGKLLIGFESGTIVMWDLRAKRADFRIYYDEAIHSVSWHHEGRQFMCSHSDGSLSMWNMRNTAKPFQVTFPHGKTQRDGRKESCKPILKVEYKTSRNSSEAFVIFSGGLSYDKAGRRPTLTIMHGKAITVLEMDYPIVDFMVLCETPYLNEVQEPYAVVVLLEKDFVVVDLTQSNFPIFENPYPMDVHESPVTCTAYFADCPPDIIPVLYSIGAKHKKTGYSHKEWPVSGGTWTVGSQTYPEIIITGHADGSIKFWDATAITLQMLYKLKTSKVFEKPKTGDMGRSADLVEEDPYAVQMISWCPQSRIFCVVGISAHVILYRFSKHDANTIITSLELRLQCEMEDVISPSDTENTPCFSDPSGHSPQPQPPSPRSNTPDSVRDSIPCLKVKDRMIRMPPGYQAELVVQLLWVDGEPPQQITCLDLNSAYGLLALGNCNGLAVVDYLQKTILLCMSTLELYGSADPFQRLTRSPRKNRQSTSGLTELSDNQVSLDLERSKSPTSDHVNGHCTSPTSQPCPSGRARVPGGPEGPRLARRGPGRPPFRKAQSAACMEVSLPVSSLTEENSFSRSRSSSVSSIDRETKEAVTTLQFAESYGRKSDSLPTPCLWVGTSLGLVLIIPMSIPTDEQERQEDPVTVAPTGTVLMLKGSVLRFGFLDCGGALINSPYEVWRDQHAPDDPDRPRKRKLVNFSPSSSQEACGDGHLAVVCSERQAKVFYMPSQACLYVHNITESSFVLRADVVSVSNSVCLACFCANGHIMILSLPSLRPLLDVSYLPLTDMRIARTFCFTNGGQALYLCSPTEIQRITYSQEMCETLGELFTPIETPEAQNRGFLKGFFGGNAQTFDREELFGEASAGKASRSLAQHIPGQGGIEGMKAAAGGVVGDLARARIALDERGQRLGELEERTALMMTSAETFSKHAHELMLKCKDKKWYQF.

Residues 1 to 37 (MKKFRKVLDGLTTSSPVNPGGSPGCGSAAGTPSAAPT) form a disordered region. Residues 25 to 37 (CGSAAGTPSAAPT) are compositionally biased toward low complexity. 10 WD repeats span residues 67 to 108 (TALA…CHSQ), 115 to 154 (VLQM…SLKF), 159 to 195 (ITFC…GYVI), 214 to 248 (HLSD…DFRI), 254 to 286 (IHSV…TAKP), 307 to 350 (PILK…KAIT), 358 to 392 (IVDF…VVDL), 414 to 491 (TCTA…YKLK), 519 to 628 (QMIS…ELVV), and 642 to 703 (TCLD…STSG). 2 disordered regions span residues 571–604 (SDTE…SVRD) and 690–770 (LTRS…KAQS). Composition is skewed to polar residues over residues 699 to 713 (QSTS…NQVS) and 721 to 739 (SPTS…SQPC). WD repeat units follow at residues 808–865 (VTTL…TGTV), 874–946 (RFGF…QACL), 951–995 (ITES…LDVS), and 1009–1032 (CFTN…TYSQ). The 61-residue stretch at 1094-1154 (GIEGMKAAAG…HELMLKCKDK (61 aa)) folds into the v-SNARE coiled-coil homology domain.

The protein belongs to the WD repeat L(2)GL family.

It localises to the cytoplasm. It is found in the cell membrane. Its subcellular location is the membrane. May play a role in vesicle trafficking and exocytosis. This is Syntaxin-binding protein 5-like (stxbp5l) from Danio rerio (Zebrafish).